The primary structure comprises 179 residues: Large ribosomal subunit protein uL5 (179 aa).

The protein belongs to the universal ribosomal protein uL5 family. Part of the 50S ribosomal subunit; part of the 5S rRNA/L5/L18/L25 subcomplex. Contacts the 5S rRNA and the P site tRNA. Forms a bridge to the 30S subunit in the 70S ribosome.

This is one of the proteins that bind and probably mediate the attachment of the 5S RNA into the large ribosomal subunit, where it forms part of the central protuberance. In the 70S ribosome it contacts protein S13 of the 30S subunit (bridge B1b), connecting the 2 subunits; this bridge is implicated in subunit movement. Contacts the P site tRNA; the 5S rRNA and some of its associated proteins might help stabilize positioning of ribosome-bound tRNAs. The polypeptide is Large ribosomal subunit protein uL5 (Anoxybacillus flavithermus (strain DSM 21510 / WK1)).